The sequence spans 496 residues: Glutamate--tRNA ligase (496 aa).

The 'HIGH' region signature appears at 10–20 (PSPTGPLHIGG). The short motif at 251–255 (KMSKR) is the 'KMSKS' region element. Lys-254 is an ATP binding site.

It belongs to the class-I aminoacyl-tRNA synthetase family. Glutamate--tRNA ligase type 1 subfamily. In terms of assembly, monomer.

The protein resides in the cytoplasm. The catalysed reaction is tRNA(Glu) + L-glutamate + ATP = L-glutamyl-tRNA(Glu) + AMP + diphosphate. Its function is as follows. Catalyzes the attachment of glutamate to tRNA(Glu) in a two-step reaction: glutamate is first activated by ATP to form Glu-AMP and then transferred to the acceptor end of tRNA(Glu). The sequence is that of Glutamate--tRNA ligase from Heliobacterium modesticaldum (strain ATCC 51547 / Ice1).